A 269-amino-acid chain; its full sequence is Hydroxyethylthiazole kinase (269 aa).

Met-46 is a substrate binding site. Arg-121 and Thr-166 together coordinate ATP. Residue Gly-193 participates in substrate binding.

It belongs to the Thz kinase family. Mg(2+) serves as cofactor.

The catalysed reaction is 5-(2-hydroxyethyl)-4-methylthiazole + ATP = 4-methyl-5-(2-phosphooxyethyl)-thiazole + ADP + H(+). It participates in cofactor biosynthesis; thiamine diphosphate biosynthesis; 4-methyl-5-(2-phosphoethyl)-thiazole from 5-(2-hydroxyethyl)-4-methylthiazole: step 1/1. Its function is as follows. Catalyzes the phosphorylation of the hydroxyl group of 4-methyl-5-beta-hydroxyethylthiazole (THZ). The chain is Hydroxyethylthiazole kinase from Limosilactobacillus reuteri (strain DSM 20016) (Lactobacillus reuteri).